The sequence spans 171 residues: Peptide methionine sulfoxide reductase MsrA (171 aa).

The active site involves Cys-12.

It belongs to the MsrA Met sulfoxide reductase family.

The catalysed reaction is L-methionyl-[protein] + [thioredoxin]-disulfide + H2O = L-methionyl-(S)-S-oxide-[protein] + [thioredoxin]-dithiol. It catalyses the reaction [thioredoxin]-disulfide + L-methionine + H2O = L-methionine (S)-S-oxide + [thioredoxin]-dithiol. Has an important function as a repair enzyme for proteins that have been inactivated by oxidation. Catalyzes the reversible oxidation-reduction of methionine sulfoxide in proteins to methionine. The polypeptide is Peptide methionine sulfoxide reductase MsrA (Leuconostoc mesenteroides subsp. mesenteroides (strain ATCC 8293 / DSM 20343 / BCRC 11652 / CCM 1803 / JCM 6124 / NCDO 523 / NBRC 100496 / NCIMB 8023 / NCTC 12954 / NRRL B-1118 / 37Y)).